The following is a 479-amino-acid chain: Aldehyde dehydrogenase family 3 member B3 (479 aa).

Catalysis depends on residues Glu223 and Cys257. Cys476 is lipidated: S-geranylgeranyl cysteine. The propeptide at 477–479 (TLL) is removed in mature form.

Belongs to the aldehyde dehydrogenase family. Post-translationally, geranylgeranylation is important for membrane localization and enzyme activity. As to expression, expressed in testis, kidney, small intestine, spleen, white adipose tissue, liver and lung.

Its subcellular location is the cell membrane. It catalyses the reaction an aldehyde + NAD(+) + H2O = a carboxylate + NADH + 2 H(+). The enzyme catalyses hexadecanoate + NADH + 2 H(+) = hexadecanal + NAD(+) + H2O. The catalysed reaction is octanal + NAD(+) + H2O = octanoate + NADH + 2 H(+). Oxidizes medium and long chain aldehydes into non-toxic fatty acids. This is Aldehyde dehydrogenase family 3 member B3 from Mus musculus (Mouse).